We begin with the raw amino-acid sequence, 61 residues long: Large ribosomal subunit protein uL30 (61 aa).

This sequence belongs to the universal ribosomal protein uL30 family. As to quaternary structure, part of the 50S ribosomal subunit.

This Exiguobacterium sp. (strain ATCC BAA-1283 / AT1b) protein is Large ribosomal subunit protein uL30.